A 230-amino-acid chain; its full sequence is Protein CbbY (230 aa).

The Nucleophile role is filled by Asp-8. Mg(2+)-binding residues include Asp-8 and Asp-10. A substrate-binding site is contributed by Asp-8. The active-site Proton donor is Asp-10. Residues Glu-17, 50 to 54 (GGKER), 75 to 78 (HRAK), and 115 to 121 (TTTSLPN) contribute to the substrate site. Position 176 (Asp-176) interacts with Mg(2+).

This sequence belongs to the HAD-like hydrolase superfamily. CbbY/CbbZ/Gph/YieH family. Mg(2+) serves as cofactor.

The catalysed reaction is D-xylulose 1,5-bisphosphate + H2O = D-xylulose 5-phosphate + phosphate. In terms of biological role, highly selective xylulose-1,5-bisphosphate (XuBP) phosphatase. Also shows activity towards ribulose-1,5-bisphosphate (RuBP) and fructose-1,6-bisphosphate (FBP), but not towards fructose-6-phosphate (F6P) or ribulose-5-phosphate (Ru5P). Degrades xylulose-1,5-bisphosphate, a potent inhibitor of rubisco produced by the rubisco itself. This Cereibacter sphaeroides (Rhodobacter sphaeroides) protein is Protein CbbY.